A 349-amino-acid polypeptide reads, in one-letter code: 6-phosphogluconolactonase (349 aa).

Residues 125-151 (LQSPVSEAAHTGKGPHERQEKPHTHYA) are disordered. Residues 138–147 (GPHERQEKPH) are compositionally biased toward basic and acidic residues.

This sequence belongs to the cycloisomerase 2 family.

The catalysed reaction is 6-phospho-D-glucono-1,5-lactone + H2O = 6-phospho-D-gluconate + H(+). It functions in the pathway carbohydrate degradation; pentose phosphate pathway; D-ribulose 5-phosphate from D-glucose 6-phosphate (oxidative stage): step 2/3. In terms of biological role, catalyzes the hydrolysis of 6-phosphogluconolactone to 6-phosphogluconate. The chain is 6-phosphogluconolactonase (pgl) from Bacillus subtilis (strain 168).